A 530-amino-acid polypeptide reads, in one-letter code: CTP synthase (530 aa).

An amidoligase domain region spans residues 1–264; it reads MPKLIIVTGG…GDFLTRRLRL (264 aa). CTP is bound at residue S13. UTP is bound at residue S13. Residue 14–19 participates in ATP binding; it reads GVGKGV. Y54 is a binding site for L-glutamine. ATP is bound at residue D71. Positions 71 and 139 each coordinate Mg(2+). CTP contacts are provided by residues 146-148, 185-190, and K221; these read DYE and KTKPLQ. UTP-binding positions include 185–190 and K221; that span reads KTKPLQ. Positions 289 to 530 constitute a Glutamine amidotransferase type-1 domain; the sequence is SVGMCGKYVE…LLKAALFAKR (242 aa). G351 contributes to the L-glutamine binding site. The active-site Nucleophile; for glutamine hydrolysis is C378. L-glutamine contacts are provided by residues 379–382, E402, and R459; that span reads FGMQ. Catalysis depends on residues H504 and E506.

It belongs to the CTP synthase family. Homotetramer.

It carries out the reaction UTP + L-glutamine + ATP + H2O = CTP + L-glutamate + ADP + phosphate + 2 H(+). The catalysed reaction is L-glutamine + H2O = L-glutamate + NH4(+). It catalyses the reaction UTP + NH4(+) + ATP = CTP + ADP + phosphate + 2 H(+). It functions in the pathway pyrimidine metabolism; CTP biosynthesis via de novo pathway; CTP from UDP: step 2/2. Allosterically activated by GTP, when glutamine is the substrate; GTP has no effect on the reaction when ammonia is the substrate. The allosteric effector GTP functions by stabilizing the protein conformation that binds the tetrahedral intermediate(s) formed during glutamine hydrolysis. Inhibited by the product CTP, via allosteric rather than competitive inhibition. Functionally, catalyzes the ATP-dependent amination of UTP to CTP with either L-glutamine or ammonia as the source of nitrogen. Regulates intracellular CTP levels through interactions with the four ribonucleotide triphosphates. This Pyrobaculum aerophilum (strain ATCC 51768 / DSM 7523 / JCM 9630 / CIP 104966 / NBRC 100827 / IM2) protein is CTP synthase.